The sequence spans 124 residues: MGKARGDEAYFQRSSLFWVTIIILSFGYYTWVIFWPESIPYQSLGPLGPFTQYLLKHHHTLVHAWYWLAWMIHVGESLYAIVLCKSKGITNTWTQLLWFLQTFLFGLASLYYLIAFRPKHQKQT.

3 consecutive transmembrane segments (helical) span residues 16 to 36 (LFWV…IFWP), 62 to 82 (VHAW…YAIV), and 96 to 116 (LLWF…LIAF).

The protein resides in the membrane. The chain is Transmembrane protein 254 (TMEM254) from Bos taurus (Bovine).